Reading from the N-terminus, the 267-residue chain is 4-hydroxy-tetrahydrodipicolinate reductase (267 aa).

NAD(+) contacts are provided by residues 9–14 (GVSGRM) and D35. NADP(+) is bound at residue R36. NAD(+) contacts are provided by residues 98–100 (GTT) and 122–125 (APNM). The Proton donor/acceptor role is filled by H155. H156 is a (S)-2,3,4,5-tetrahydrodipicolinate binding site. K159 functions as the Proton donor in the catalytic mechanism. Residue 165-166 (GT) participates in (S)-2,3,4,5-tetrahydrodipicolinate binding.

This sequence belongs to the DapB family.

Its subcellular location is the cytoplasm. The enzyme catalyses (S)-2,3,4,5-tetrahydrodipicolinate + NAD(+) + H2O = (2S,4S)-4-hydroxy-2,3,4,5-tetrahydrodipicolinate + NADH + H(+). It catalyses the reaction (S)-2,3,4,5-tetrahydrodipicolinate + NADP(+) + H2O = (2S,4S)-4-hydroxy-2,3,4,5-tetrahydrodipicolinate + NADPH + H(+). The protein operates within amino-acid biosynthesis; L-lysine biosynthesis via DAP pathway; (S)-tetrahydrodipicolinate from L-aspartate: step 4/4. Functionally, catalyzes the conversion of 4-hydroxy-tetrahydrodipicolinate (HTPA) to tetrahydrodipicolinate. The polypeptide is 4-hydroxy-tetrahydrodipicolinate reductase (Thiobacillus denitrificans (strain ATCC 25259 / T1)).